The following is a 34-amino-acid chain: Protein MgtT (34 aa).

The interval 1–34 (MNGDNPSPNRPLVTVVYKGPDFYDGEKKPPVNRR) is disordered. The segment covering 24–34 (DGEKKPPVNRR) has biased composition (basic and acidic residues).

This is Protein MgtT from Escherichia coli (strain K12).